A 248-amino-acid polypeptide reads, in one-letter code: Pulmonary surfactant-associated protein A (248 aa).

A signal peptide spans 1–20; it reads MWLCPLALTLTLMAASGAAC. The 70-residue stretch at 31–100 folds into the Collagen-like domain; it reads GIPGTPGSHG…PGERGPPGLP (70 aa). Residues 33–100 are disordered; sequence PGTPGSHGLP…PGERGPPGLP (68 aa). Over residues 42 to 51 the composition is skewed to basic and acidic residues; the sequence is PGRDGRDGVK. Positions 54–65 are enriched in pro residues; the sequence is PGPPGPMGPPGD. Residues 134-247 form the C-type lectin domain; sequence IGGKVFSTNG…CLYNRLTICE (114 aa). 2 cysteine pairs are disulfide-bonded: cysteine 155-cysteine 246 and cysteine 224-cysteine 238. Asparagine 207 carries an N-linked (GlcNAc...) asparagine glycan. The Ca(2+) site is built by glutamate 215, alanine 217, asparagine 234, and aspartate 235.

Belongs to the SFTPA family. Oligomeric complex of 6 set of homotrimers.

It is found in the secreted. Its subcellular location is the extracellular space. It localises to the extracellular matrix. The protein localises to the surface film. In terms of biological role, in presence of calcium ions, it binds to surfactant phospholipids and contributes to lower the surface tension at the air-liquid interface in the alveoli of the mammalian lung and is essential for normal respiration. Enhances the expression of MYO18A/SP-R210 on alveolar macrophages. The protein is Pulmonary surfactant-associated protein A (SFTPA1) of Macaca mulatta (Rhesus macaque).